Reading from the N-terminus, the 258-residue chain is Global transcriptional regulator CodY (258 aa).

The interval 1 to 156 is GAF domain; sequence MSSLLDKTRM…SATIIGLEIL (156 aa). Residues 204–223 constitute a DNA-binding region (H-T-H motif); it reads ASKIADKVGITRSVIVNALR.

The protein belongs to the CodY family.

The protein localises to the cytoplasm. DNA-binding global transcriptional regulator which is involved in the adaptive response to starvation and acts by directly or indirectly controlling the expression of numerous genes in response to nutrient availability. During rapid exponential growth, CodY is highly active and represses genes whose products allow adaptation to nutrient depletion. The polypeptide is Global transcriptional regulator CodY (Clostridium botulinum (strain ATCC 19397 / Type A)).